The following is a 117-amino-acid chain: Large ribosomal subunit protein bL20c (117 aa).

Belongs to the bacterial ribosomal protein bL20 family.

It is found in the plastid. The protein localises to the chloroplast. Binds directly to 23S ribosomal RNA and is necessary for the in vitro assembly process of the 50S ribosomal subunit. It is not involved in the protein synthesizing functions of that subunit. This Calycanthus floridus var. glaucus (Eastern sweetshrub) protein is Large ribosomal subunit protein bL20c.